Reading from the N-terminus, the 457-residue chain is Sensor protein CpxA (457 aa).

Topologically, residues 1–7 (MIGSLTA) are cytoplasmic. The chain crosses the membrane as a helical span at residues 8 to 29 (RIFAIFWLTLALVLMLVLMLPK). Topologically, residues 30 to 163 (LDSRQMTELL…SDFINLLFDR (134 aa)) are periplasmic. Residues 164 to 184 (PLLLLIVTMLVSTPLLLWLAW) form a helical membrane-spanning segment. One can recognise an HAMP domain in the interval 185–237 (SLAKPARKLKNAADEVAQGNLRQHPELEAGPQEFLAAGASFNQMVTALERMMT). The Cytoplasmic segment spans residues 185-457 (SLAKPARKLK…VIWLPLYKRS (273 aa)). A Histidine kinase domain is found at 245 to 455 (DISHELRTPL…RLVIWLPLYK (211 aa)). Phosphohistidine; by autocatalysis is present on histidine 248.

It localises to the cell inner membrane. It carries out the reaction ATP + protein L-histidine = ADP + protein N-phospho-L-histidine.. In terms of biological role, this protein is involved in several diverse cellular processes, such as the functioning of acetohydroxyacid synthetase I, in the biosynthesis of isoleucine and valine, the TraJ protein activation activity for tra gene expression in F plasmid, and the synthesis, translocation, or stability of cell envelope proteins. Activates CpxR by phosphorylation. In Escherichia coli O157:H7, this protein is Sensor protein CpxA (cpxA).